The sequence spans 440 residues: tRNA(Ile)-lysidine synthase (440 aa).

13–18 (SGGADS) contacts ATP.

This sequence belongs to the tRNA(Ile)-lysidine synthase family.

Its subcellular location is the cytoplasm. It catalyses the reaction cytidine(34) in tRNA(Ile2) + L-lysine + ATP = lysidine(34) in tRNA(Ile2) + AMP + diphosphate + H(+). In terms of biological role, ligates lysine onto the cytidine present at position 34 of the AUA codon-specific tRNA(Ile) that contains the anticodon CAU, in an ATP-dependent manner. Cytidine is converted to lysidine, thus changing the amino acid specificity of the tRNA from methionine to isoleucine. The polypeptide is tRNA(Ile)-lysidine synthase (Solibacter usitatus (strain Ellin6076)).